The sequence spans 367 residues: UDP-N-acetylglucosamine--N-acetylmuramyl-(pentapeptide) pyrophosphoryl-undecaprenol N-acetylglucosamine transferase (367 aa).

Residues Thr-15–Gly-17, Asn-127, Arg-163, Ser-191, Ile-249, and Gln-294 each bind UDP-N-acetyl-alpha-D-glucosamine.

This sequence belongs to the glycosyltransferase 28 family. MurG subfamily.

The protein resides in the cell inner membrane. The catalysed reaction is di-trans,octa-cis-undecaprenyl diphospho-N-acetyl-alpha-D-muramoyl-L-alanyl-D-glutamyl-meso-2,6-diaminopimeloyl-D-alanyl-D-alanine + UDP-N-acetyl-alpha-D-glucosamine = di-trans,octa-cis-undecaprenyl diphospho-[N-acetyl-alpha-D-glucosaminyl-(1-&gt;4)]-N-acetyl-alpha-D-muramoyl-L-alanyl-D-glutamyl-meso-2,6-diaminopimeloyl-D-alanyl-D-alanine + UDP + H(+). Its pathway is cell wall biogenesis; peptidoglycan biosynthesis. Functionally, cell wall formation. Catalyzes the transfer of a GlcNAc subunit on undecaprenyl-pyrophosphoryl-MurNAc-pentapeptide (lipid intermediate I) to form undecaprenyl-pyrophosphoryl-MurNAc-(pentapeptide)GlcNAc (lipid intermediate II). In Burkholderia thailandensis (strain ATCC 700388 / DSM 13276 / CCUG 48851 / CIP 106301 / E264), this protein is UDP-N-acetylglucosamine--N-acetylmuramyl-(pentapeptide) pyrophosphoryl-undecaprenol N-acetylglucosamine transferase.